The chain runs to 993 residues: Chromosome transmission fidelity protein 18 homolog (993 aa).

The disordered stretch occupies residues 26–72 (PDEFNAYDGPSTSKQAAEKQKENRAPVAALRDSTRLGNSTLGSPQLS). A compositionally biased stretch (polar residues) spans 60-72 (RLGNSTLGSPQLS). 427-434 (GPPGLGKT) is a binding site for ATP. The tract at residues 892 to 913 (AAPKGGAPSAPAAKKKTSGAAA) is disordered. Over residues 894–913 (PKGGAPSAPAAKKKTSGAAA) the composition is skewed to low complexity.

The protein belongs to the activator 1 small subunits family. CTF18 subfamily. In terms of assembly, component of the CTF18-RFC complex.

The protein localises to the nucleus. In terms of biological role, chromosome cohesion factor involved in sister chromatid cohesion and fidelity of chromosome transmission. Component of one of the cell nuclear antigen loader complexes, CTF18-replication factor C (CTF18-RFC). The CTF18-RFC complex catalyzes the ATP-dependent loading of PCNA onto primed and gapped DNA and has weak ATPase activity. The CTF18-RFC complex catalyzes the ATP-dependent loading of PCNA onto primed and gapped DNA. The polypeptide is Chromosome transmission fidelity protein 18 homolog (Drosophila melanogaster (Fruit fly)).